A 1296-amino-acid polypeptide reads, in one-letter code: Protein STU1 (1296 aa).

4 disordered regions span residues 258–287, 735–793, 888–946, and 953–972; these read ATSAPVLSPPAPTTFAPTTRSQFNSSHGAD, LSQT…PPVT, ALQQ…HISA, and TTSHRVLSSTPSRRAPTNGV. A compositionally biased stretch (polar residues) spans 277-287; the sequence is RSQFNSSHGAD. Low complexity-rich tracts occupy residues 755–782, 900–919, and 933–946; these read SARSRAISSSSYSSQGSSSSARMQGAAS, TISTSSTSSTNSSTTPASAS, and HSPSPSASASHISA. Positions 953–964 are enriched in polar residues; the sequence is TTSHRVLSSTPS.

The protein belongs to the CLASP family. As to quaternary structure, interacts with microtubules.

The protein resides in the cytoplasm. It is found in the cytoskeleton. Its subcellular location is the nucleus. The protein localises to the spindle. In terms of biological role, microtubule binding protein that promotes the stabilization of dynamic microtubules. Required for mitotic spindle formation. The protein is Protein STU1 (STU1) of Mycosarcoma maydis (Corn smut fungus).